Consider the following 474-residue polypeptide: AAA-ATPase At3g28610 (474 aa).

Positions 1–25 (MMGNMFGSSLASLFFLWATIQQIFP) are cleaved as a signal peptide. Residue 244 to 251 (GPPGTGKS) participates in ATP binding.

This sequence belongs to the AAA ATPase family. BCS1 subfamily. Requires Mg(2+) as cofactor.

The catalysed reaction is ATP + H2O = ADP + phosphate + H(+). The chain is AAA-ATPase At3g28610 from Arabidopsis thaliana (Mouse-ear cress).